The primary structure comprises 382 residues: Rubredoxin-NAD(+) reductase (382 aa).

Residues 9–12 (TGLA), 33–34 (TA), Lys-42, Val-80, Glu-156, Asp-275, Val-287, and Lys-318 contribute to the FAD site.

The protein belongs to the FAD-dependent oxidoreductase family. In terms of assembly, homodimer. Requires FAD as cofactor.

The protein localises to the cytoplasm. The enzyme catalyses 2 reduced [rubredoxin] + NAD(+) + H(+) = 2 oxidized [rubredoxin] + NADH. The protein operates within hydrocarbon metabolism; alkane degradation. Functionally, involved in the hydrocarbon hydroxylating system, which transfers electrons from NADH to rubredoxin reductase and then through rubredoxin to alkane 1 monooxygenase. The polypeptide is Rubredoxin-NAD(+) reductase (rubB) (Alcanivorax borkumensis (strain ATCC 700651 / DSM 11573 / NCIMB 13689 / SK2)).